Here is a 316-residue protein sequence, read N- to C-terminus: 4-hydroxy-3-methylbut-2-enyl diphosphate reductase (316 aa).

A [4Fe-4S] cluster-binding site is contributed by Cys-12. The (2E)-4-hydroxy-3-methylbut-2-enyl diphosphate site is built by His-41 and His-74. 2 residues coordinate dimethylallyl diphosphate: His-41 and His-74. The isopentenyl diphosphate site is built by His-41 and His-74. Cys-96 contributes to the [4Fe-4S] cluster binding site. Residue His-124 coordinates (2E)-4-hydroxy-3-methylbut-2-enyl diphosphate. His-124 is a dimethylallyl diphosphate binding site. His-124 is an isopentenyl diphosphate binding site. Glu-126 acts as the Proton donor in catalysis. Residue Thr-169 participates in (2E)-4-hydroxy-3-methylbut-2-enyl diphosphate binding. Cys-199 serves as a coordination point for [4Fe-4S] cluster. Residues Ser-227, Ser-228, Asn-229, and Ser-271 each contribute to the (2E)-4-hydroxy-3-methylbut-2-enyl diphosphate site. Residues Ser-227, Ser-228, Asn-229, and Ser-271 each coordinate dimethylallyl diphosphate. 4 residues coordinate isopentenyl diphosphate: Ser-227, Ser-228, Asn-229, and Ser-271.

This sequence belongs to the IspH family. [4Fe-4S] cluster is required as a cofactor.

The catalysed reaction is isopentenyl diphosphate + 2 oxidized [2Fe-2S]-[ferredoxin] + H2O = (2E)-4-hydroxy-3-methylbut-2-enyl diphosphate + 2 reduced [2Fe-2S]-[ferredoxin] + 2 H(+). It catalyses the reaction dimethylallyl diphosphate + 2 oxidized [2Fe-2S]-[ferredoxin] + H2O = (2E)-4-hydroxy-3-methylbut-2-enyl diphosphate + 2 reduced [2Fe-2S]-[ferredoxin] + 2 H(+). The protein operates within isoprenoid biosynthesis; dimethylallyl diphosphate biosynthesis; dimethylallyl diphosphate from (2E)-4-hydroxy-3-methylbutenyl diphosphate: step 1/1. It functions in the pathway isoprenoid biosynthesis; isopentenyl diphosphate biosynthesis via DXP pathway; isopentenyl diphosphate from 1-deoxy-D-xylulose 5-phosphate: step 6/6. Functionally, catalyzes the conversion of 1-hydroxy-2-methyl-2-(E)-butenyl 4-diphosphate (HMBPP) into a mixture of isopentenyl diphosphate (IPP) and dimethylallyl diphosphate (DMAPP). Acts in the terminal step of the DOXP/MEP pathway for isoprenoid precursor biosynthesis. The chain is 4-hydroxy-3-methylbut-2-enyl diphosphate reductase from Xanthomonas campestris pv. campestris (strain ATCC 33913 / DSM 3586 / NCPPB 528 / LMG 568 / P 25).